The primary structure comprises 363 residues: NAD(P)H-quinone oxidoreductase subunit 1, chloroplastic (363 aa).

The next 7 membrane-spanning stretches (helical) occupy residues 30-50 (LVPILTLVVGITIGVLVIVWL), 98-118 (FSIGPSMAVISILLSYSVIPF), 129-149 (VGVFLWIAISSIAPIGLLMSG), 165-185 (AAQSISYEIPLTLCVLSISLL), 253-273 (FAFFYITSYFNLLVSSLFVTI), 303-323 (TTTELFITLAKTFFFLFISIT), and 336-356 (LLNLGWKFLLPISLGNLLLTT).

This sequence belongs to the complex I subunit 1 family. As to quaternary structure, NDH is composed of at least 16 different subunits, 5 of which are encoded in the nucleus.

It is found in the plastid. It localises to the chloroplast thylakoid membrane. The enzyme catalyses a plastoquinone + NADH + (n+1) H(+)(in) = a plastoquinol + NAD(+) + n H(+)(out). It carries out the reaction a plastoquinone + NADPH + (n+1) H(+)(in) = a plastoquinol + NADP(+) + n H(+)(out). Functionally, NDH shuttles electrons from NAD(P)H:plastoquinone, via FMN and iron-sulfur (Fe-S) centers, to quinones in the photosynthetic chain and possibly in a chloroplast respiratory chain. The immediate electron acceptor for the enzyme in this species is believed to be plastoquinone. Couples the redox reaction to proton translocation, and thus conserves the redox energy in a proton gradient. The chain is NAD(P)H-quinone oxidoreductase subunit 1, chloroplastic from Pelargonium hortorum (Common geranium).